A 424-amino-acid polypeptide reads, in one-letter code: Kynurenine--oxoglutarate transaminase 1 (424 aa).

G36 provides a ligand contact to substrate. K82 carries the post-translational modification N6-succinyllysine. Position 185 (N185) interacts with substrate. K247 is modified (N6-(pyridoxal phosphate)lysine). R398 contacts substrate. Position 413 is an N6-succinyllysine (K413).

This sequence belongs to the class-I pyridoxal-phosphate-dependent aminotransferase family. As to quaternary structure, homodimer. It depends on pyridoxal 5'-phosphate as a cofactor.

The protein resides in the cytoplasm. Its subcellular location is the cytosol. It catalyses the reaction L-kynurenine + 2-oxoglutarate = kynurenate + L-glutamate + H2O. It carries out the reaction 3-phenylpyruvate + L-glutamine = 2-oxoglutaramate + L-phenylalanine. The enzyme catalyses an S-substituted L-cysteine + H2O = a thiol + pyruvate + NH4(+). It participates in amino-acid degradation; L-kynurenine degradation; kynurenate from L-kynurenine: step 1/2. Its function is as follows. Catalyzes the irreversible transamination of the L-tryptophan metabolite L-kynurenine to form kynurenic acid (KA), an intermediate in the tryptophan catabolic pathway which is also a broad spectrum antagonist of the three ionotropic excitatory amino acid receptors among others. Metabolizes the cysteine conjugates of certain halogenated alkenes and alkanes to form reactive metabolites. Catalyzes the beta-elimination of S-conjugates and Se-conjugates of L-(seleno)cysteine, resulting in the cleavage of the C-S or C-Se bond. The protein is Kynurenine--oxoglutarate transaminase 1 (Kyat1) of Mus musculus (Mouse).